Reading from the N-terminus, the 214-residue chain is 3-demethoxyubiquinol 3-hydroxylase (214 aa).

Fe cation-binding residues include Glu-63, Glu-93, His-96, Glu-145, Glu-177, and His-180.

This sequence belongs to the COQ7 family. Fe cation is required as a cofactor.

The protein resides in the cell membrane. It catalyses the reaction a 5-methoxy-2-methyl-3-(all-trans-polyprenyl)benzene-1,4-diol + AH2 + O2 = a 3-demethylubiquinol + A + H2O. Its pathway is cofactor biosynthesis; ubiquinone biosynthesis. In terms of biological role, catalyzes the hydroxylation of 2-nonaprenyl-3-methyl-6-methoxy-1,4-benzoquinol during ubiquinone biosynthesis. In Psychrobacter arcticus (strain DSM 17307 / VKM B-2377 / 273-4), this protein is 3-demethoxyubiquinol 3-hydroxylase.